The following is a 654-amino-acid chain: Sucrose:sucrose 1-fructosyltransferase (654 aa).

A propeptide spanning residues 1 to 106 is cleaved from the precursor; sequence MESSAVVPGT…VSEKASGAYS (106 aa). N-linked (GlcNAc...) asparagine glycosylation is present at asparagine 32. Residue aspartate 136 is part of the active site. N-linked (GlcNAc...) asparagine glycans are attached at residues asparagine 328, asparagine 457, asparagine 491, asparagine 506, and asparagine 625.

This sequence belongs to the glycosyl hydrolase 32 family. Monomer. In terms of tissue distribution, accumulates at the base of growing leaves.

It is found in the vacuole. The catalysed reaction is 2 sucrose = 1(F)-beta-D-fructosylsucrose + D-glucose. In terms of biological role, transferase involved in fructan biosynthesis that catalyzes the production of 1-kestose (fructose and nystose to a lower extent) from sucrose. Also exhibits some hydrolase activity toward 1-kestose, thus producing fructose and sucrose. A weak fructosyltransferase activity leads to the formation of nystose from 1-kestose. This is Sucrose:sucrose 1-fructosyltransferase (1-SST) from Festuca arundinacea (Tall fescue).